Reading from the N-terminus, the 243-residue chain is MDTENKSRADLALPNPQESPSAPDIELLEASPPAKALPEKPASPPPQQTWQSFLKKELEFLGVTQVLVGLICLCFGTVVCSTLQTSDFDDEVLLLYRAGYPFWGAVLFVLSGFLSIMSERKNTLYLVRGSLGANIVSSIAAGLGIAILILNLSNNSAYMNYCKDITEDDGCFVTSFITELVLMLLFLTILAFCSAVLLIIYRIGQEFERSKVPDDRLYEELHVYSPIYSALEDTREASAPVVS.

Residues 1 to 48 are disordered; it reads MDTENKSRADLALPNPQESPSAPDIELLEASPPAKALPEKPASPPPQQ. Residues 1 to 59 lie on the Cytoplasmic side of the membrane; the sequence is MDTENKSRADLALPNPQESPSAPDIELLEASPPAKALPEKPASPPPQQTWQSFLKKELE. Residues 60–79 form a helical membrane-spanning segment; that stretch reads FLGVTQVLVGLICLCFGTVV. The Extracellular segment spans residues 80-97; it reads CSTLQTSDFDDEVLLLYR. A helical membrane pass occupies residues 98–117; the sequence is AGYPFWGAVLFVLSGFLSIM. Residues 118-130 lie on the Cytoplasmic side of the membrane; sequence SERKNTLYLVRGS. The chain crosses the membrane as a helical span at residues 131–150; sequence LGANIVSSIAAGLGIAILIL. Over 151–179 the chain is Extracellular; the sequence is NLSNNSAYMNYCKDITEDDGCFVTSFITE. A helical membrane pass occupies residues 180-199; the sequence is LVLMLLFLTILAFCSAVLLI. At 200-243 the chain is on the cytoplasmic side; it reads IYRIGQEFERSKVPDDRLYEELHVYSPIYSALEDTREASAPVVS. A phosphotyrosine mark is found at Y218 and Y224. S225 is modified (phosphoserine). Residue Y228 is modified to Phosphotyrosine.

This sequence belongs to the MS4A family. Tetramer of an alpha chain, a beta chain, and two disulfide linked gamma chains. Binds LILRB1. Interacts with FES/FPS and LYN. Interacts with FGR. Post-translationally, phosphorylated on tyrosine residues by LYN.

Its subcellular location is the membrane. In terms of biological role, high affinity receptor that binds to the Fc region of immunoglobulins epsilon. Aggregation of FCER1 by multivalent antigens is required for the full mast cell response, including the release of preformed mediators (such as histamine) by degranulation and de novo production of lipid mediators and cytokines. Also mediates the secretion of important lymphokines. Binding of allergen to receptor-bound IgE leads to cell activation and the release of mediators responsible for the manifestations of allergy. The sequence is that of High affinity immunoglobulin epsilon receptor subunit beta (Ms4a2) from Rattus norvegicus (Rat).